The sequence spans 363 residues: uncharacterized protein (363 aa).

The signal sequence occupies residues Met-1 to Ala-20.

The protein belongs to the fimbrial protein family.

The protein resides in the fimbrium. Part of the yraHIJK fimbrial operon. Could contribute to adhesion to various surfaces in specific environmental niches. Increases adhesion to eukaryotic T24 bladder epithelial cells in the absence of fim operon. This is an uncharacterized protein from Escherichia coli (strain K12).